A 350-amino-acid chain; its full sequence is Protein-glutamate methylesterase/protein-glutamine glutaminase 2 (350 aa).

The 119-residue stretch at arginine 3–glutamate 121 folds into the Response regulatory domain. Aspartate 54 is subject to 4-aspartylphosphate. Residues isoleucine 158–alanine 322 form the CheB-type methylesterase domain. Active-site residues include serine 170, histidine 197, and aspartate 290.

This sequence belongs to the CheB family. Post-translationally, phosphorylated by CheA. Phosphorylation of the N-terminal regulatory domain activates the methylesterase activity.

The protein localises to the cytoplasm. It carries out the reaction [protein]-L-glutamate 5-O-methyl ester + H2O = L-glutamyl-[protein] + methanol + H(+). It catalyses the reaction L-glutaminyl-[protein] + H2O = L-glutamyl-[protein] + NH4(+). In terms of biological role, involved in chemotaxis. Part of a chemotaxis signal transduction system that modulates chemotaxis in response to various stimuli. Catalyzes the demethylation of specific methylglutamate residues introduced into the chemoreceptors (methyl-accepting chemotaxis proteins or MCP) by CheR. Also mediates the irreversible deamidation of specific glutamine residues to glutamic acid. The polypeptide is Protein-glutamate methylesterase/protein-glutamine glutaminase 2 (Methanospirillum hungatei JF-1 (strain ATCC 27890 / DSM 864 / NBRC 100397 / JF-1)).